The primary structure comprises 292 residues: Ribosomal protein L11 methyltransferase (292 aa).

4 residues coordinate S-adenosyl-L-methionine: Thr-136, Gly-159, Asp-181, and Asn-228.

It belongs to the methyltransferase superfamily. PrmA family.

The protein resides in the cytoplasm. The enzyme catalyses L-lysyl-[protein] + 3 S-adenosyl-L-methionine = N(6),N(6),N(6)-trimethyl-L-lysyl-[protein] + 3 S-adenosyl-L-homocysteine + 3 H(+). Its function is as follows. Methylates ribosomal protein L11. This chain is Ribosomal protein L11 methyltransferase, found in Agrobacterium fabrum (strain C58 / ATCC 33970) (Agrobacterium tumefaciens (strain C58)).